The primary structure comprises 933 residues: Isoleucine--tRNA ligase (933 aa).

Positions 57-67 match the 'HIGH' region motif; sequence PYANGNIHVGH. Residue E554 participates in L-isoleucyl-5'-AMP binding. The 'KMSKS' region motif lies at 595–599; it reads KMSKS. ATP is bound at residue K598.

It belongs to the class-I aminoacyl-tRNA synthetase family. IleS type 1 subfamily. Monomer.

It localises to the cytoplasm. It catalyses the reaction tRNA(Ile) + L-isoleucine + ATP = L-isoleucyl-tRNA(Ile) + AMP + diphosphate. Catalyzes the attachment of isoleucine to tRNA(Ile). As IleRS can inadvertently accommodate and process structurally similar amino acids such as valine, to avoid such errors it has two additional distinct tRNA(Ile)-dependent editing activities. One activity is designated as 'pretransfer' editing and involves the hydrolysis of activated Val-AMP. The other activity is designated 'posttransfer' editing and involves deacylation of mischarged Val-tRNA(Ile). The sequence is that of Isoleucine--tRNA ligase from Streptococcus pyogenes serotype M18 (strain MGAS8232).